The following is a 179-amino-acid chain: Large ribosomal subunit protein uL6 (179 aa).

It belongs to the universal ribosomal protein uL6 family. In terms of assembly, part of the 50S ribosomal subunit.

Functionally, this protein binds to the 23S rRNA, and is important in its secondary structure. It is located near the subunit interface in the base of the L7/L12 stalk, and near the tRNA binding site of the peptidyltransferase center. The protein is Large ribosomal subunit protein uL6 of Metamycoplasma arthritidis (strain 158L3-1) (Mycoplasma arthritidis).